A 452-amino-acid polypeptide reads, in one-letter code: MKFSIYLIISLFSSFSHAIWLDTNNETTIREDCNIIAKGLLDYYEGTKYGGVIGMFSWPYYWWEAGGAWGSLIDYTFYFDNDTLVPLITDALLYQTGDDDNYIPLNQSTTEGNDDQAFWGIAVMAAAERNFTNPKDPTKAWLTLAQAVFNTMQARWDTETCNGGLRWQIFQWNSGYDYKNSVSNGALFHLAARLARYTGNDSYVVWAERVWDWMYGVGLLTEQNWWFVYDGVKIANNCSNITKYQWSYNQGLMLAGCAYLYNYTEEEKWYNYTIKLLESAQVFFKNISGSMVMYEAACQPSNSCNNDQRSFKAYFSRFLGLTSVLVPQTEPVITKWLVDSANGAAGSCSGGSDGVTCGLSWTDWSQGWDGKWGLGEQMSALEVMQNLMVHKRPAPYTADTGGSSIGNPAAGYGKLTSDATPLSIDGGDKAGAGIITAIIGASLVGSCVWLIL.

The first 18 residues, 1 to 18 (MKFSIYLIISLFSSFSHA), serve as a signal peptide directing secretion. 10 N-linked (GlcNAc...) asparagine glycosylation sites follow: Asn25, Asn81, Asn106, Asn130, Asn200, Asn237, Asn240, Asn262, Asn271, and Asn286. Residue Gly431 is the site of GPI-anchor amidated glycine attachment. A propeptide spans 432 to 452 (AGIITAIIGASLVGSCVWLIL) (removed in mature form).

The protein belongs to the glycosyl hydrolase 76 family.

It localises to the cell membrane. It catalyses the reaction Random hydrolysis of (1-&gt;6)-alpha-D-mannosidic linkages in unbranched (1-&gt;6)-mannans.. Functionally, probable mannosidase required for normal synthesis of the cell wall. The protein is Mannan endo-1,6-alpha-mannosidase DCW1 (DCW1) of Candida albicans (strain SC5314 / ATCC MYA-2876) (Yeast).